The following is a 51-amino-acid chain: Insulin (51 aa).

Intrachain disulfides connect Cys-7/Cys-37, Cys-19/Cys-50, and Cys-36/Cys-41.

It belongs to the insulin family. As to quaternary structure, heterodimer of a B chain and an A chain linked by two disulfide bonds.

Its subcellular location is the secreted. Functionally, insulin decreases blood glucose concentration. It increases cell permeability to monosaccharides, amino acids and fatty acids. It accelerates glycolysis, the pentose phosphate cycle, and glycogen synthesis in liver. The polypeptide is Insulin (INS) (Saimiri sciureus (Common squirrel monkey)).